The following is a 510-amino-acid chain: Bifunctional purine biosynthesis protein PurH (510 aa).

An MGS-like domain is found at 1 to 143 (MTKRALISVS…KNHDAVLVLV (143 aa)).

The protein belongs to the PurH family.

It catalyses the reaction (6R)-10-formyltetrahydrofolate + 5-amino-1-(5-phospho-beta-D-ribosyl)imidazole-4-carboxamide = 5-formamido-1-(5-phospho-D-ribosyl)imidazole-4-carboxamide + (6S)-5,6,7,8-tetrahydrofolate. The catalysed reaction is IMP + H2O = 5-formamido-1-(5-phospho-D-ribosyl)imidazole-4-carboxamide. It participates in purine metabolism; IMP biosynthesis via de novo pathway; 5-formamido-1-(5-phospho-D-ribosyl)imidazole-4-carboxamide from 5-amino-1-(5-phospho-D-ribosyl)imidazole-4-carboxamide (10-formyl THF route): step 1/1. It functions in the pathway purine metabolism; IMP biosynthesis via de novo pathway; IMP from 5-formamido-1-(5-phospho-D-ribosyl)imidazole-4-carboxamide: step 1/1. This chain is Bifunctional purine biosynthesis protein PurH, found in Deinococcus radiodurans (strain ATCC 13939 / DSM 20539 / JCM 16871 / CCUG 27074 / LMG 4051 / NBRC 15346 / NCIMB 9279 / VKM B-1422 / R1).